The sequence spans 209 residues: Ribosomal RNA small subunit methyltransferase G (209 aa).

S-adenosyl-L-methionine contacts are provided by residues Gly72, Leu77, 123–124, and Arg138; that span reads AE.

It belongs to the methyltransferase superfamily. RNA methyltransferase RsmG family.

It localises to the cytoplasm. In terms of biological role, specifically methylates the N7 position of guanine in position 518 of 16S rRNA. The polypeptide is Ribosomal RNA small subunit methyltransferase G (Leifsonia xyli subsp. xyli (strain CTCB07)).